The primary structure comprises 650 residues: Macrolide export ATP-binding/permease protein MacB (650 aa).

In terms of domain architecture, ABC transporter spans 2-238 (IDIKGIRKSY…PTTAQEKRQE (237 aa)). An ATP-binding site is contributed by 38–45 (GPSGSGKS). 4 consecutive transmembrane segments (helical) span residues 267 to 287 (GLSM…LALG), 531 to 551 (IAAI…LVSV), 580 to 600 (IVVS…FSLL), and 610 to 630 (VVSA…GIVF).

Belongs to the ABC transporter superfamily. Macrolide exporter (TC 3.A.1.122) family. Homodimer.

The protein localises to the cell inner membrane. In terms of biological role, non-canonical ABC transporter that contains transmembrane domains (TMD), which form a pore in the inner membrane, and an ATP-binding domain (NBD), which is responsible for energy generation. Confers resistance against macrolides. The sequence is that of Macrolide export ATP-binding/permease protein MacB from Bdellovibrio bacteriovorus (strain ATCC 15356 / DSM 50701 / NCIMB 9529 / HD100).